We begin with the raw amino-acid sequence, 367 residues long: Cellular tumor antigen p53 (367 aa).

Residues 1-47 (MEEENISLPLSQDTFQDLWDNVSAPPISTIQTAALENEAWPAERQMN) are transcription activation (acidic). Residues 86 to 273 (DYPGEYGFKL…KTEETNSTKM (188 aa)) mediate DNA binding. Residues Cys-160, His-163, Cys-219, and Cys-223 each coordinate Zn(2+). The interval 254–261 (RVCACPGR) is interaction with DNA. The span at 262–279 (DRKTEETNSTKMQNDAKD) shows a compositional bias: basic and acidic residues. Disordered regions lie at residues 262 to 306 (DRKT…AEED) and 332 to 367 (DLLE…SDSD). Residues 282–300 (KRKSVPTPDSTTIKKSKTA) carry the Bipartite nuclear localization signal motif. A compositionally biased stretch (low complexity) spans 291 to 302 (STTIKKSKTASS). The tract at residues 308-337 (NEVYTLQIRGRKRYEMLKKINDGLDLLENK) is oligomerization. The Nuclear export signal motif lies at 322-333 (EMLKKINDGLDL). The segment at 342-363 (ATHRPDGPIPPSGKRLLHRGEK) is basic (repression of DNA-binding).

It belongs to the p53 family. Binds DNA as a homotetramer. It depends on Zn(2+) as a cofactor.

It is found in the cytoplasm. The protein resides in the nucleus. Functionally, multifunctional transcription factor that induces cell cycle arrest, DNA repair or apoptosis upon binding to its target DNA sequence. Acts as a tumor suppressor in many tumor types; induces growth arrest or apoptosis depending on the physiological circumstances and cell type. Negatively regulates cell division by controlling expression of a set of genes required for this process. One of the activated genes is an inhibitor of cyclin-dependent kinases. Apoptosis induction seems to be mediated either by stimulation of BAX and FAS antigen expression, or by repression of Bcl-2 expression. This is Cellular tumor antigen p53 (tp53) from Tetraodon miurus (Congo puffer).